We begin with the raw amino-acid sequence, 37 residues long: Potassium channel toxin alpha-KTx 1.13 (37 aa).

Glutamine 1 carries the pyrrolidone carboxylic acid modification. 3 cysteine pairs are disulfide-bonded: cysteine 7–cysteine 28, cysteine 13–cysteine 33, and cysteine 17–cysteine 35. An interaction with Ca(2+)-activated K(+) channels region spans residues 26 to 33 (GKCMNKKC).

It belongs to the short scorpion toxin superfamily. Potassium channel inhibitor family. Alpha-KTx 01 subfamily. In terms of tissue distribution, expressed by the venom gland.

The protein localises to the secreted. Its function is as follows. Potent selective inhibitor of high conductance (maxi-K), different medium and small conductance calcium-activated potassium channels (KCa1.1/KCNMA1 and others), as well as a voltage-dependent potassium channel (Kv1.3/KCNA3&gt;Kv1.2/KCNA2&gt;Kv1.6/KCNA3&gt;&gt;Shaker/Sh). It blocks channel activity by a simple bimolecular inhibition process. In terms of biological role, has a pH-specific antimicrobial activity against bacteria (B.subtilis, E.coli and S.aureus) and the fungus C.albicans. In Leiurus hebraeus (Hebrew deathstalker scorpion), this protein is Potassium channel toxin alpha-KTx 1.13.